A 652-amino-acid chain; its full sequence is ATP-binding cassette sub-family G member 5 (652 aa).

A disordered region spans residues 1–25 (MGELPFLSPEGARGPHINRGSLSSL). Residues 1–384 (MGELPFLSPE…RVTRNLMRNK (384 aa)) lie on the Cytoplasmic side of the membrane. Positions 39–294 (LGVLHVSYSV…FNNCGYPCPE (256 aa)) constitute an ABC transporter domain. Cysteine 61 carries the S-palmitoyl cysteine lipid modification. 87 to 94 (GSSGSGKT) contacts ATP. The chain crosses the membrane as a helical span at residues 385–405 (QAVIMRLVQNLIMGLFLIFYL). One can recognise an ABC transmembrane type-2 domain in the interval 389 to 646 (MRLVQNLIMG…ILGIVIFKVR (258 aa)). Over 406–422 (LRVQNNTLKGAVQDRVG) the chain is Extracellular. Asparagine 410 carries N-linked (GlcNAc...) asparagine glycosylation. A helical membrane pass occupies residues 423–443 (LLYQLVGATPYTGMLNAVNLF). Over 444-468 (PMLRAVSDQESQDGLYHKWQMLLAY) the chain is Cytoplasmic. A helical membrane pass occupies residues 469–490 (VLHVLPFSVIATVIFSSVCYWT). At 491-501 (LGLYPEVARFG) the chain is on the extracellular side. The helical transmembrane segment at 502 to 522 (YFSAALLAPHLIGEFLTLVLL) threads the bilayer. Over 523-529 (GIVQNPN) the chain is Cytoplasmic. Residues 530–550 (IVNSIVALLSISGLLIGSGFI) traverse the membrane as a helical segment. At 551-624 (RNIQEMPIPL…PGATSRFTAN (74 aa)) the chain is on the extracellular side. N-linked (GlcNAc...) asparagine glycosylation is found at asparagine 585 and asparagine 592. Residues 625-645 (FLILYGFIPALVILGIVIFKV) form a helical membrane-spanning segment. Residues 646-652 (RDYLISR) are Cytoplasmic-facing.

Belongs to the ABC transporter superfamily. ABCG family. Eye pigment precursor importer (TC 3.A.1.204) subfamily. As to quaternary structure, heterodimer with ABCG8. It depends on Mg(2+) as a cofactor. Post-translationally, N-glycosylated. N-glycosylation is important for efficient export out of the endoplasmic reticulum. As to expression, detected in liver and jejunum. Detected on enterocyte villi (at protein level). Expressed in jejunum, ileum and, at lower level, in the liver.

It localises to the cell membrane. The protein resides in the apical cell membrane. It catalyses the reaction cholesterol(in) + ATP + H2O = cholesterol(out) + ADP + phosphate + H(+). The catalysed reaction is sitosterol(in) + ATP + H2O = sitosterol(out) + ADP + phosphate + H(+). Cholesterol transport is inhibited by vanadate and by beryllium fluoride. ABCG5 and ABCG8 form an obligate heterodimer that mediates Mg(2+)- and ATP-dependent sterol transport across the cell membrane. Plays an essential role in the selective transport of dietary plant sterols and cholesterol in and out of the enterocytes and in the selective sterol excretion by the liver into bile. Required for normal sterol homeostasis. The heterodimer with ABCG8 has ATPase activity. The sequence is that of ATP-binding cassette sub-family G member 5 from Mus musculus (Mouse).